Reading from the N-terminus, the 145-residue chain is 3-hydroxyacyl-[acyl-carrier-protein] dehydratase FabZ (145 aa).

The active site involves His-50.

It belongs to the thioester dehydratase family. FabZ subfamily.

The protein localises to the cytoplasm. It catalyses the reaction a (3R)-hydroxyacyl-[ACP] = a (2E)-enoyl-[ACP] + H2O. Functionally, involved in unsaturated fatty acids biosynthesis. Catalyzes the dehydration of short chain beta-hydroxyacyl-ACPs and long chain saturated and unsaturated beta-hydroxyacyl-ACPs. This is 3-hydroxyacyl-[acyl-carrier-protein] dehydratase FabZ from Coxiella burnetii (strain CbuK_Q154) (Coxiella burnetii (strain Q154)).